Reading from the N-terminus, the 91-residue chain is MHYRSQRRSVLFTAPGLIVGALAIGAAGGISVSPGDILALVEKPHLLVAVLFVGAFTGIMVEQALSRMRRQDGARGTARAGRNSARRRMPS.

2 helical membrane-spanning segments follow: residues 10 to 30 (VLFTAPGLIVGALAIGAAGGI) and 46 to 66 (LLVAVLFVGAFTGIMVEQALS). The interval 68 to 91 (MRRQDGARGTARAGRNSARRRMPS) is disordered.

Its subcellular location is the cell membrane. This is an uncharacterized protein from Sinorhizobium fredii (strain NBRC 101917 / NGR234).